A 261-amino-acid chain; its full sequence is Glutathione S-transferase theta-1 (261 aa).

The GST N-terminal domain maps to 2–101 (GLELYLDLLS…YLSRKYNTPD (100 aa)). Residues 72–73 (KV) and 85–86 (EC) each bind glutathione. The 142-residue stretch at 107-248 (DIKKRAQVDE…LSNIQIDPQL (142 aa)) folds into the GST C-terminal domain.

This sequence belongs to the GST superfamily. Theta family. Homodimer.

The protein resides in the cytoplasm. It carries out the reaction RX + glutathione = an S-substituted glutathione + a halide anion + H(+). Conjugation of reduced glutathione to a wide number of exogenous and endogenous hydrophobic electrophiles. The chain is Glutathione S-transferase theta-1 (GSTT1) from Gallus gallus (Chicken).